The following is an 86-amino-acid chain: uncharacterized protein (86 aa).

A helical transmembrane segment spans residues Val-63–Phe-85.

The protein localises to the membrane. This is an uncharacterized protein from Dictyostelium discoideum (Social amoeba).